A 463-amino-acid chain; its full sequence is Fumarate hydratase class II (463 aa).

Residues Ser-97–Thr-99, Arg-125, His-128–Asp-131, Ser-138–Asn-140, and Thr-186 each bind substrate. Residues Arg-121–Asn-134 are compositionally biased toward basic and acidic residues. Residues Arg-121–Thr-142 form a disordered region. His-187 functions as the Proton donor/acceptor in the catalytic mechanism. Ser-317 is an active-site residue. Residues Ser-318 and Lys-323 to Asn-325 contribute to the substrate site.

It belongs to the class-II fumarase/aspartase family. Fumarase subfamily. In terms of assembly, homotetramer.

It is found in the cytoplasm. It carries out the reaction (S)-malate = fumarate + H2O. It participates in carbohydrate metabolism; tricarboxylic acid cycle; (S)-malate from fumarate: step 1/1. In terms of biological role, involved in the TCA cycle. Catalyzes the stereospecific interconversion of fumarate to L-malate. The protein is Fumarate hydratase class II of Bordetella bronchiseptica (strain ATCC BAA-588 / NCTC 13252 / RB50) (Alcaligenes bronchisepticus).